Consider the following 956-residue polypeptide: Glutamate receptor ionotropic, kainate 4 (956 aa).

The first 20 residues, methionine 1–cysteine 20, serve as a signal peptide directing secretion. The Extracellular portion of the chain corresponds to serine 21 to proline 545. Residues asparagine 158, asparagine 220, asparagine 272, asparagine 286, asparagine 323, asparagine 408, asparagine 415, and asparagine 479 are each glycosylated (N-linked (GlcNAc...) asparagine). Glycine 500, threonine 502, and arginine 507 together coordinate L-glutamate. Residues glycine 546 to alanine 566 form a helical membrane-spanning segment. Topologically, residues arginine 567–glycine 623 are cytoplasmic. A helical membrane pass occupies residues valine 624–leucine 644. Residues threonine 645 to asparagine 804 are Extracellular-facing. Positions 674, 675, and 723 each coordinate L-glutamate. A glycan (N-linked (GlcNAc...) asparagine) is linked at asparagine 736. The chain crosses the membrane as a helical span at residues isoleucine 805–leucine 825. Topologically, residues glutamate 826 to glutamate 956 are cytoplasmic. The segment at leucine 931 to glutamate 956 is disordered. Residues arginine 939–lysine 948 are compositionally biased toward basic and acidic residues.

The protein belongs to the glutamate-gated ion channel (TC 1.A.10.1) family. GRIK4 subfamily. In terms of assembly, homodimer. Can form functional heteromeric receptors with GRIK1, GRIK2 and GRIK3. In terms of tissue distribution, strong expression in hippocampal CA3 pyramidal cells. Low expression in hippocampal dentate granule cells, in layers II, V and VI of the cortex, and in cerebellar Purkinje cells. No expression in the striatum, reticular thalamus, hypothalamus or amygdaloid complex.

It localises to the cell membrane. It is found in the postsynaptic cell membrane. The protein resides in the presynaptic cell membrane. In terms of biological role, ionotropic glutamate receptor that functions as a cation-permeable ligand-gated ion channel, gated by L-glutamate and the glutamatergic agonist kainic acid. Cannot form functional channels on its own and shows channel activity only in heteromeric assembly with GRIK1, GRIK2 and GRIK3 subunits. The polypeptide is Glutamate receptor ionotropic, kainate 4 (Grik4) (Rattus norvegicus (Rat)).